A 267-amino-acid chain; its full sequence is 2-keto-3-deoxy-L-rhamnonate aldolase (267 aa).

The active-site Proton acceptor is His-49. A substrate-binding site is contributed by Gln-151. Glu-153 is a Mg(2+) binding site. Residues Ala-178 and Asp-179 each coordinate substrate. Asp-179 serves as a coordination point for Mg(2+).

This sequence belongs to the HpcH/HpaI aldolase family. KDR aldolase subfamily. In terms of assembly, homohexamer. Mg(2+) serves as cofactor.

It carries out the reaction 2-dehydro-3-deoxy-L-rhamnonate = (S)-lactaldehyde + pyruvate. Its function is as follows. Catalyzes the reversible retro-aldol cleavage of 2-keto-3-deoxy-L-rhamnonate (KDR) to pyruvate and lactaldehyde. The protein is 2-keto-3-deoxy-L-rhamnonate aldolase of Salmonella gallinarum (strain 287/91 / NCTC 13346).